Here is a 21-residue protein sequence, read N- to C-terminus: Helicopsin (21 aa).

Belongs to the CRISP family. In terms of processing, contains 8 disulfide bonds. In terms of tissue distribution, expressed by the salivary gland.

The protein localises to the secreted. Functionally, helicopsin exhibits robust neurotoxic activity as shown by immediate death (about 8 minutes) of mice due to respiratory paralysis. The chain is Helicopsin from Helicops angulatus (South American water snake).